The chain runs to 409 residues: Torsin-4A (409 aa).

Over residues 1 to 16 (MGEQDPSDRLRGDQLK) the composition is skewed to basic and acidic residues. 2 disordered regions span residues 1-28 (MGEQ…SFSQ) and 75-99 (DNLH…KGRV). The segment covering 17-28 (EPNQNGKGSFSQ) has biased composition (polar residues). The segment covering 88 to 98 (PRKRKKKRKGR) has biased composition (basic residues). A helical transmembrane segment spans residues 120-136 (CLYLLCIIVFLQVYNAI). Residue 192–199 (GPTGVGKS) participates in ATP binding.

Belongs to the ClpA/ClpB family. Torsin subfamily.

The protein resides in the membrane. The sequence is that of Torsin-4A (tor4a) from Danio rerio (Zebrafish).